A 249-amino-acid polypeptide reads, in one-letter code: Type III pantothenate kinase (249 aa).

Residue 6 to 13 coordinates ATP; that stretch reads DCGNSFIK. Substrate contacts are provided by residues Tyr-93 and 100 to 103; that span reads GMDR. Residue Asp-102 is the Proton acceptor of the active site. Residue Asp-122 coordinates K(+). Thr-125 is a binding site for ATP. Thr-181 contributes to the substrate binding site.

The protein belongs to the type III pantothenate kinase family. Homodimer. It depends on NH4(+) as a cofactor. The cofactor is K(+).

It is found in the cytoplasm. The catalysed reaction is (R)-pantothenate + ATP = (R)-4'-phosphopantothenate + ADP + H(+). It functions in the pathway cofactor biosynthesis; coenzyme A biosynthesis; CoA from (R)-pantothenate: step 1/5. Functionally, catalyzes the phosphorylation of pantothenate (Pan), the first step in CoA biosynthesis. This is Type III pantothenate kinase from Pseudomonas putida (strain ATCC 700007 / DSM 6899 / JCM 31910 / BCRC 17059 / LMG 24140 / F1).